The primary structure comprises 1181 residues: MGKLIRMGTQERRLLRPKRLHWSRLLFFLGMLIIGSTYQHLRRPQNPPSMWTKVSSQQPIKLAIRDLPNDEITVTDKDPPEASSEVEGEMLAPQDTVIIGEAAPSIAMEDTPNPPITTKITPTSLKNNYSPTTAGTRRQKENIPPTPSRAPSHFISTSGRQRVKSYTPKPRGGRKSSSPTHTREEGRMHTPSPAGAPRTISPTSTEKDSETTATYRMLEPRSERTAGKTSLKRMVPNTRTFLTREVETDLVTSPSLVGKNTLGSPRRGERNSSTTPLRAVLQPTPATSEEQVTASIRMGSTPATTEGSTAAQRIGNPLSGTSTPAVRIASVTDREKRPSTAHGTLVTPQVKAVLTTQVHRCVVVKPAPAVPMTPSPSMTAILFPEAPTSGPSALPPGWPNLHPKAEYPPDLFSVEDRRQGWVVLHIFGMTYVFVALAIVCDEYFVPALGVITDKLQISEDVAGATFMAAGGSAPELFTSLIGVFISHSNVGIGTIVGSAVFNILFVIGTCALFSREILNLTWWPLFRDVSFYILDLSMLIVFFLDSLIAWWESLLLLLAYALYVFTMKWNKQIERWVKEQLSRRPVAKVMALGDLSKPSDGAIEENEQQDNKKLKLPSVLTRGSSSASLHNSIIRSTIYHLMLHSLDPLGEARPSKDKQESLNQEARVLPQTKAESSSDEEEPAELPAVTVTPAPAPEDKGDQEEDPGCQEDVDEAEHRGDMTGEEGERETEAEGKKDEEGETEAERKEDGQEEETETKGKEKQEGETESEGKDEQEGETEAEGKEADHEGETEAEGKEVEHEGETEAEGTEDEQEGETEAEGKEVEQEGETEAEGKEVEHEVETEAERKETNHEGETEAEGKEADHEGETEAEGNVEHQGETEAEGKVEHEGETEAGEKDEHEGQSETQADDTEVKDGEGEAEANAEDQCETAQGEKGADGGGGSDGGDSEEEEDEEDEEEEEEEEEEEEEEESEEPLSLEWPESRQKQAIYLFLLPIVFPLWLTIPDVRRQEARKFFVITFLGSIIWIAMFSYLMVWWAHQVGETIGISEEIMGLTILAAGTSIPDLITSVIVARKGLGDMAVSSSVGSNIFDITVGLPVPWLLFSLINALQPIPVSSNGLFCAIVLLFLMLLFVIFSIASCKWRMNKILGFTMFLLYFVFLVISVMLEDRIISCPVSV.

The Extracellular segment spans residues Met1–Gln419. 3 disordered regions span residues Ala107–Lys232, Ser255–Pro276, and Ser300–Thr323. Residues Ser124–Thr136 show a composition bias toward polar residues. A glycan (N-linked (GlcNAc...) asparagine) is linked at Asn271. A compositionally biased stretch (polar residues) spans Thr301–Ala311. Residues Gly420 to Cys440 form a helical membrane-spanning segment. Residues Asp441–Ala464 are Cytoplasmic-facing. The stretch at Val461 to Phe501 is one Alpha-1 repeat. Residues Thr465–Ile485 form a helical membrane-spanning segment. The Extracellular portion of the chain corresponds to Ser486–Gly491. The helical transmembrane segment at Ile492–Leu512 threads the bilayer. Residues Phe513–Asn519 are Cytoplasmic-facing. A helical membrane pass occupies residues Leu520–Leu544. Residues Asp545–Glu552 lie on the Extracellular side of the membrane. Residues Ser553 to Trp569 traverse the membrane as a helical segment. The Cytoplasmic segment spans residues Asn570–Lys989. The tract at residues Pro598 to Pro617 is disordered. Residue Ser625 is modified to Phosphoserine. Residues Gly650–Trp983 are disordered. Thr690 carries the phosphothreonine modification. Acidic residues predominate over residues Gly701 to Glu715. 14 consecutive repeat copies span residues Glu730–Gly741, Glu742–Glu754, Glu755–Gly766, Glu767–Gly778, Glu779–Gly791, Glu792–Gly804, Glu805–Gly817, Glu818–Gly830, Glu831–Val843, Glu844–Gly856, Glu857–Gly869, Glu870–Gly881, Glu882–Gly893, and Glu894–Gly905. Basic and acidic residues-rich tracts occupy residues Glu730 to Asp750, Glu757 to Glu775, and Ala782 to Glu805. Residues Glu730–Gly905 form a 14 X approximate tandem repeats region. Residues Thr806 to Glu820 are compositionally biased toward acidic residues. A compositionally biased stretch (basic and acidic residues) spans Ala834–Gln906. Composition is skewed to acidic residues over residues Gly921–Cys931 and Gly949–Leu979. Residues Gln990–Val1010 traverse the membrane as a helical segment. At Arg1011–Lys1017 the chain is on the extracellular side. The chain crosses the membrane as a helical span at residues Phe1018 to Val1038. Residues Trp1039 to Glu1053 lie on the Cytoplasmic side of the membrane. Residues Ile1054–Ile1074 form a helical membrane-spanning segment. Residues Ala1061–Asn1092 form an Alpha-2 repeat. Over Val1075–Asn1092 the chain is Extracellular. Residues Ile1093–Leu1113 form a helical membrane-spanning segment. The Cytoplasmic segment spans residues Gln1114–Asn1121. A helical transmembrane segment spans residues Gly1122 to Ala1142. Over Ser1143–Lys1150 the chain is Extracellular. The chain crosses the membrane as a helical span at residues Ile1151–Glu1171. At Asp1172–Val1181 the chain is on the cytoplasmic side.

Belongs to the Ca(2+):cation antiporter (CaCA) (TC 2.A.19) family. SLC24A subfamily. Post-translationally, the uncleaved signal sequence is required for efficient membrane targeting and proper membrane integration and topology. Highly expressed in the eye.

The protein localises to the cell membrane. The catalysed reaction is Ca(2+)(out) + K(+)(out) + 4 Na(+)(in) = Ca(2+)(in) + K(+)(in) + 4 Na(+)(out). In terms of biological role, calcium, potassium:sodium antiporter that transports 1 Ca(2+) and 1 K(+) in exchange for 4 Na(+). Critical component of the visual transduction cascade, controlling the calcium concentration of outer segments during light and darkness. Light causes a rapid lowering of cytosolic free calcium in the outer segment of both retinal rod and cone photoreceptors and the light-induced lowering of calcium is caused by extrusion via this protein which plays a key role in the process of light adaptation. The chain is Sodium/potassium/calcium exchanger 1 (Slc24a1) from Rattus norvegicus (Rat).